The sequence spans 151 residues: Lipoprotein signal peptidase (151 aa).

3 helical membrane passes run 3-23 (LYII…GWIV), 59-79 (WFFY…FYTS), and 85-107 (LYRI…RLHL). Catalysis depends on residues aspartate 112 and aspartate 128. Residues 123–143 (IFNVADTALTCGVICVFIAIL) traverse the membrane as a helical segment.

This sequence belongs to the peptidase A8 family.

The protein localises to the cell membrane. The enzyme catalyses Release of signal peptides from bacterial membrane prolipoproteins. Hydrolyzes -Xaa-Yaa-Zaa-|-(S,diacylglyceryl)Cys-, in which Xaa is hydrophobic (preferably Leu), and Yaa (Ala or Ser) and Zaa (Gly or Ala) have small, neutral side chains.. It participates in protein modification; lipoprotein biosynthesis (signal peptide cleavage). This protein specifically catalyzes the removal of signal peptides from prolipoproteins. The protein is Lipoprotein signal peptidase of Latilactobacillus sakei subsp. sakei (strain 23K) (Lactobacillus sakei subsp. sakei).